Consider the following 1054-residue polypeptide: DIS3-like exonuclease 1 (1054 aa).

Positions 236 to 309 (AGIKSGRYIQ…PKNEWKGRTV (74 aa)) constitute a CSD1 domain. The 67-residue stretch at 365–431 (ILVTPWDYRI…GEIATILVEN (67 aa)) folds into the CSD2 domain. The RNB domain maps to 465 to 816 (RKDLRKSHLV…VHRLLMAAIS (352 aa)). At Ser989 the chain carries Phosphoserine.

It belongs to the RNR ribonuclease family. As to quaternary structure, component of the RNA exosome complex. The catalytically inactive RNA exosome core (Exo-9) complex is believed to associate with catalytic subunits EXOSC10, and DIS3 or DIS3L in cytoplasmic- and nuclear-specific RNA exosome complex forms. Mg(2+) is required as a cofactor.

It is found in the cytoplasm. The catalysed reaction is Exonucleolytic cleavage in the 3'- to 5'-direction to yield nucleoside 5'-phosphates.. Its function is as follows. Catalytic component of the RNA exosome complex which has 3'-&gt;5' exoribonuclease activity and participates in a multitude of cellular RNA processing and degradation events. In the cytoplasm, the RNA exosome complex is involved in general mRNA turnover and specifically degrades inherently unstable mRNAs containing AU-rich elements (AREs) within their 3' untranslated regions, and in RNA surveillance pathways, preventing translation of aberrant mRNAs. It seems to be involved in degradation of histone mRNA. In Homo sapiens (Human), this protein is DIS3-like exonuclease 1 (DIS3L).